Here is a 376-residue protein sequence, read N- to C-terminus: Probable allantoicase (376 aa).

Belongs to the allantoicase family.

It carries out the reaction allantoate + H2O = (S)-ureidoglycolate + urea. It functions in the pathway nitrogen metabolism; (S)-allantoin degradation; (S)-ureidoglycolate from allantoate (aminidohydrolase route): step 1/1. The sequence is that of Probable allantoicase from Streptomyces coelicolor (strain ATCC BAA-471 / A3(2) / M145).